The chain runs to 259 residues: 4-hydroxy-tetrahydrodipicolinate reductase (259 aa).

Residues 8–13, 94–96, and 120–123 each bind NAD(+); these read GFAGAM, GTT, and APNF. Residue His150 is the Proton donor/acceptor of the active site. A (S)-2,3,4,5-tetrahydrodipicolinate-binding site is contributed by His151. The Proton donor role is filled by Lys154. 160–161 contributes to the (S)-2,3,4,5-tetrahydrodipicolinate binding site; it reads GT.

This sequence belongs to the DapB family.

The protein resides in the cytoplasm. It carries out the reaction (S)-2,3,4,5-tetrahydrodipicolinate + NAD(+) + H2O = (2S,4S)-4-hydroxy-2,3,4,5-tetrahydrodipicolinate + NADH + H(+). The catalysed reaction is (S)-2,3,4,5-tetrahydrodipicolinate + NADP(+) + H2O = (2S,4S)-4-hydroxy-2,3,4,5-tetrahydrodipicolinate + NADPH + H(+). The protein operates within amino-acid biosynthesis; L-lysine biosynthesis via DAP pathway; (S)-tetrahydrodipicolinate from L-aspartate: step 4/4. Its function is as follows. Catalyzes the conversion of 4-hydroxy-tetrahydrodipicolinate (HTPA) to tetrahydrodipicolinate. The protein is 4-hydroxy-tetrahydrodipicolinate reductase of Limosilactobacillus fermentum (strain NBRC 3956 / LMG 18251) (Lactobacillus fermentum).